The following is a 618-amino-acid chain: Sodium-coupled monocarboxylate transporter 2 (618 aa).

The Extracellular portion of the chain corresponds to 1–9; it reads MEVKNFAVW. A helical transmembrane segment spans residues 10-30; that stretch reads DYVVFAALFFISSGIGVFFAI. The Cytoplasmic segment spans residues 31 to 47; the sequence is KERKKATSREFLVGGRQ. The chain crosses the membrane as a helical span at residues 48 to 68; sequence MSFGPVGLSLTASFMSAVTVL. Over 69–82 the chain is Extracellular; that stretch reads GTPSEVYRFGASFL. The helical transmembrane segment at 83–103 threads the bilayer; it reads VFFIAYLFVILLTSELFLPVF. Topologically, residues 104-128 are cytoplasmic; that stretch reads YRSGITSTYEYLQLRFNKPVRYAAT. The helical transmembrane segment at 129 to 149 threads the bilayer; it reads VIYIVQTILYTGVVVYAPALA. Residues 150 to 157 are Extracellular-facing; it reads LNQVTGFD. A helical membrane pass occupies residues 158–178; the sequence is LWGSVFATGIVCTFYCTLGGL. At 179-180 the chain is on the cytoplasmic side; sequence KA. A helical transmembrane segment spans residues 181 to 201; it reads VVWTDAFQMVVMIVGFLTVLI. The Extracellular portion of the chain corresponds to 202–235; sequence QGSTHAGGFHNVLEQSTNGSRLHIFDFDVDPLRR. A helical transmembrane segment spans residues 236–256; sequence HTFWTITVGGTFTWLGIYGVN. At 257-275 the chain is on the cytoplasmic side; sequence QSTIQRCISCKTEKHAKLA. A helical transmembrane segment spans residues 276 to 296; that stretch reads LYFNLLGLWIILVCAVFSGLI. Over 297-321 the chain is Extracellular; it reads MYSHFKDCDPWTSGIISAPDQLMPY. A helical transmembrane segment spans residues 322–342; sequence FVMEIFATMPGLPGLFVACAF. Over 343–385 the chain is Cytoplasmic; sequence SGTLSTVASSINALATVTFEDFVKSCFPHLSDKLSTWISKGLC. Residues 386–406 traverse the membrane as a helical segment; the sequence is LLFGVMCTSMAVAASVMGGVV. The Extracellular segment spans residues 407-411; sequence QASLS. Residues 412-432 traverse the membrane as a helical segment; sequence IHGMCGGPMLGLFSLGIVFPF. Residues 433–437 lie on the Cytoplasmic side of the membrane; it reads VNWKG. The helical transmembrane segment at 438–458 threads the bilayer; it reads ALGGLLTGITLSFWVAIGAFI. At 459–504 the chain is on the extracellular side; the sequence is YPAPASKTWPLPLSTDQCIKSNVTATGPPVLSSRPGIADTWYSISY. Residue asparagine 480 is glycosylated (N-linked (GlcNAc...) asparagine). A helical transmembrane segment spans residues 505 to 525; that stretch reads LYYSAVGCLGCIVAGVIISLI. Topologically, residues 526-618 are cytoplasmic; that stretch reads TGRQRGEDIQ…NNMAFETTHF (93 aa).

This sequence belongs to the sodium:solute symporter (SSF) (TC 2.A.21) family.

It localises to the apical cell membrane. It carries out the reaction (S)-lactate(out) + Na(+)(out) = (S)-lactate(in) + Na(+)(in). It catalyses the reaction nicotinate(out) + Na(+)(out) = nicotinate(in) + Na(+)(in). The catalysed reaction is pyruvate(out) + Na(+)(out) = pyruvate(in) + Na(+)(in). The enzyme catalyses propanoate(out) + Na(+)(out) = propanoate(in) + Na(+)(in). It carries out the reaction butanoate(out) + Na(+)(out) = butanoate(in) + Na(+)(in). It catalyses the reaction acetoacetate(out) + Na(+)(out) = acetoacetate(in) + Na(+)(in). With respect to regulation, cotransport of monocarboxylates and nicotinate strongly inhibited by ibuprofen, fenoprofen and ketoprofen. Functionally, acts as an electroneutral and low-affinity sodium (Na(+))-dependent sodium-coupled solute transporter. Catalyzes the transport across the plasma membrane of many monocarboxylates such as lactate, pyruvate, nicotinate, propionate, butyrate and beta-D-hydroxybutyrate. May be responsible for the first step of reabsorption of monocarboxylates from the lumen of the proximal tubule of the kidney and the small intestine. May play also a role in monocarboxylates transport in the retina. The polypeptide is Sodium-coupled monocarboxylate transporter 2 (Homo sapiens (Human)).